The primary structure comprises 274 residues: MASLDNFDMAAGRTDGVADCVAFPGRFSTWTRALILAASAAGGGAAALAMDAAHVALVLGLAAFAGGLLSTWSPCGYSSISLLRPTGKGARAVLDWLPTFATHGLGYALGALILGTLLGAIGGIAGLSGFATSFGLGLLAVIGLAYGAHQLDFLRVPYPQRRAQVPHDARQRFPKWVVGGLYGLSLGLDYLTYVQTPLLYLVTAAAVLSGNVAEAVALIAIFNLGRYLPVAVNLLPVTDYQIQSWLGRNQERAAIADGAILTAVGAAFAMLALA.

7 consecutive transmembrane segments (helical) span residues Trp30–Met50, Ala52–Trp72, Leu105–Ala125, Leu127–Gly147, Trp176–Thr196, Val202–Phe222, and Ala253–Leu273.

It is found in the cell membrane. The protein operates within one-carbon metabolism; methylamine degradation. The protein is Methylamine utilization protein MauF (mauF) of Paracoccus versutus (Thiobacillus versutus).